The sequence spans 398 residues: Na(+)/H(+) antiporter NhaA 2 (398 aa).

11 helical membrane-spanning segments follow: residues 17–37 (ILLMLAVAMAMLLANSPLAGL), 59–79 (LLLWVNDGLMALFFLLIGLEV), 95–115 (SLPTFAAIGGMVFPALVYLGF), 125–145 (GWAIPAATDIAFALGVLALLG), 154–174 (VFLLALAIIDDIGVIVIIALF), 179–199 (LSITSLVIAAIAIGSMVILNL), 213–233 (LLLWIAVLKSGVHATLAGVVI), 262–282 (FMILPLFAFANAGLSLSGMSL), 288–308 (PAALGVMLGLLLGKPLGVLLF), 331–351 (AVAVLCGVGFTMSIFISSLAF), and 364–384 (LGTLVGSMLSASIAYFWLTKV).

This sequence belongs to the NhaA Na(+)/H(+) (TC 2.A.33) antiporter family.

It is found in the cell inner membrane. The enzyme catalyses Na(+)(in) + 2 H(+)(out) = Na(+)(out) + 2 H(+)(in). Na(+)/H(+) antiporter that extrudes sodium in exchange for external protons. This is Na(+)/H(+) antiporter NhaA 2 from Shewanella denitrificans (strain OS217 / ATCC BAA-1090 / DSM 15013).